Reading from the N-terminus, the 151-residue chain is MEEAEKASQPHAGTALAFDFGEKRIGVAIGNLELGLAHPLVTLSNKNKEECLKSIARLMDEWKPVLLVVGLPVHADGTEHELTRRSRRFAHRLQARFGIRTVLEDERYTSISASSALDEASVRGRRQKQVLDQIAAQLILQSYFDQRNATT.

The protein belongs to the YqgF nuclease family.

The protein localises to the cytoplasm. Could be a nuclease involved in processing of the 5'-end of pre-16S rRNA. The chain is Putative pre-16S rRNA nuclease from Nitrosospira multiformis (strain ATCC 25196 / NCIMB 11849 / C 71).